Here is a 189-residue protein sequence, read N- to C-terminus: Density-regulated protein homolog (189 aa).

The SUI1 domain maps to Ile-105–Trp-172.

Belongs to the DENR family. In terms of assembly, interacts with MCTS1.

Functionally, regulates translation as part of a complex with MCTS1. Specifically required for translational re-initiation in mRNAs containing upstream open reading frames (uORFs). Not required for standard translational initiation. Regulates expression of a subset of gene products including mbc, InR and EcR. The protein is Density-regulated protein homolog of Drosophila melanogaster (Fruit fly).